The primary structure comprises 286 residues: Bifunctional protein FolD (286 aa).

NADP(+) contacts are provided by residues 166-168 (GQS), serine 191, and isoleucine 232.

This sequence belongs to the tetrahydrofolate dehydrogenase/cyclohydrolase family. In terms of assembly, homodimer.

It catalyses the reaction (6R)-5,10-methylene-5,6,7,8-tetrahydrofolate + NADP(+) = (6R)-5,10-methenyltetrahydrofolate + NADPH. It carries out the reaction (6R)-5,10-methenyltetrahydrofolate + H2O = (6R)-10-formyltetrahydrofolate + H(+). It functions in the pathway one-carbon metabolism; tetrahydrofolate interconversion. Functionally, catalyzes the oxidation of 5,10-methylenetetrahydrofolate to 5,10-methenyltetrahydrofolate and then the hydrolysis of 5,10-methenyltetrahydrofolate to 10-formyltetrahydrofolate. This chain is Bifunctional protein FolD, found in Alkalilimnicola ehrlichii (strain ATCC BAA-1101 / DSM 17681 / MLHE-1).